Consider the following 118-residue polypeptide: Cell division protein FtsB (118 aa).

The Cytoplasmic portion of the chain corresponds to 1–3; sequence MRL. The helical transmembrane segment at 4 to 21 threads the bilayer; the sequence is LFLVLLVLLGLIQYPLWL. The Periplasmic segment spans residues 22–118; that stretch reads GKGGWFKVWD…PRPPATPPRR (97 aa). Residues 28 to 62 are a coiled coil; that stretch reads KVWDLQRQVAEQRETNDGLRARNTALEAEVRDLAT. Residues 88 to 118 are disordered; sequence LPPGTPLPSDNSTPQASALSKPRPPATPPRR. Residues 95–105 are compositionally biased toward polar residues; that stretch reads PSDNSTPQASA. Residues 109–118 are compositionally biased toward pro residues; sequence PRPPATPPRR.

It belongs to the FtsB family. Part of a complex composed of FtsB, FtsL and FtsQ.

Its subcellular location is the cell inner membrane. Its function is as follows. Essential cell division protein. May link together the upstream cell division proteins, which are predominantly cytoplasmic, with the downstream cell division proteins, which are predominantly periplasmic. In Bordetella bronchiseptica (strain ATCC BAA-588 / NCTC 13252 / RB50) (Alcaligenes bronchisepticus), this protein is Cell division protein FtsB.